We begin with the raw amino-acid sequence, 54 residues long: UPF0391 membrane protein BAV1230 (54 aa).

2 helical membrane passes run 5 to 25 and 27 to 47; these read AAVF…GIAA and AAGI…LSVL.

Belongs to the UPF0391 family.

The protein resides in the cell membrane. In Bordetella avium (strain 197N), this protein is UPF0391 membrane protein BAV1230.